Reading from the N-terminus, the 98-residue chain is NADH-ubiquinone oxidoreductase chain 4L (98 aa).

The next 3 membrane-spanning stretches (helical) occupy residues 2–22 (PSIS…MLIF), 29–49 (SLLC…LTIL), and 61–81 (ILLL…LVTV).

This sequence belongs to the complex I subunit 4L family. As to quaternary structure, core subunit of respiratory chain NADH dehydrogenase (Complex I) which is composed of 45 different subunits.

The protein localises to the mitochondrion inner membrane. The enzyme catalyses a ubiquinone + NADH + 5 H(+)(in) = a ubiquinol + NAD(+) + 4 H(+)(out). Core subunit of the mitochondrial membrane respiratory chain NADH dehydrogenase (Complex I) which catalyzes electron transfer from NADH through the respiratory chain, using ubiquinone as an electron acceptor. Part of the enzyme membrane arm which is embedded in the lipid bilayer and involved in proton translocation. In Eulemur rubriventer (Red-bellied lemur), this protein is NADH-ubiquinone oxidoreductase chain 4L (MT-ND4L).